The sequence spans 153 residues: 6,7-dimethyl-8-ribityllumazine synthase (153 aa).

5-amino-6-(D-ribitylamino)uracil contacts are provided by residues F22, A56–E58, and C80–I82. Residue A85–T86 coordinates (2S)-2-hydroxy-3-oxobutyl phosphate. The active-site Proton donor is H88. 5-amino-6-(D-ribitylamino)uracil is bound at residue F113. Position 127 (R127) interacts with (2S)-2-hydroxy-3-oxobutyl phosphate.

It belongs to the DMRL synthase family.

The catalysed reaction is (2S)-2-hydroxy-3-oxobutyl phosphate + 5-amino-6-(D-ribitylamino)uracil = 6,7-dimethyl-8-(1-D-ribityl)lumazine + phosphate + 2 H2O + H(+). It functions in the pathway cofactor biosynthesis; riboflavin biosynthesis; riboflavin from 2-hydroxy-3-oxobutyl phosphate and 5-amino-6-(D-ribitylamino)uracil: step 1/2. Functionally, catalyzes the formation of 6,7-dimethyl-8-ribityllumazine by condensation of 5-amino-6-(D-ribitylamino)uracil with 3,4-dihydroxy-2-butanone 4-phosphate. This is the penultimate step in the biosynthesis of riboflavin. The chain is 6,7-dimethyl-8-ribityllumazine synthase from Endomicrobium trichonymphae.